The chain runs to 103 residues: Protamine-3 (103 aa).

A disordered region spans residues 1–103; sequence MGSRCAKLNT…QSPEPKRTPS (103 aa). Low complexity predominate over residues 10-21; the sequence is TGQSPGHSPGHS. The segment covering 50 to 66 has biased composition (acidic residues); it reads GEEEEEEEEEGEEEEKE. Basic and acidic residues predominate over residues 78–90; sequence EPERQEEGHKDNA. At Ser95 the chain carries Phosphoserine.

Belongs to the protamine P3 family.

The protein resides in the nucleus. It localises to the chromosome. In terms of biological role, protamines substitute for histones in the chromatin of sperm during the haploid phase of spermatogenesis. They compact sperm DNA into a highly condensed, stable and inactive complex. This Homo sapiens (Human) protein is Protamine-3 (PRM3).